We begin with the raw amino-acid sequence, 256 residues long: Phosphonates import ATP-binding protein PhnC (256 aa).

The ABC transporter domain occupies 7–251 (IEMKNVTKVY…VFDNIYNGGK (245 aa)). ATP is bound at residue 40-47 (GLSGAGKS).

It belongs to the ABC transporter superfamily. Phosphonates importer (TC 3.A.1.9.1) family. As to quaternary structure, the complex is composed of two ATP-binding proteins (PhnC), two transmembrane proteins (PhnE) and a solute-binding protein (PhnD).

It localises to the cell membrane. It carries out the reaction phosphonate(out) + ATP + H2O = phosphonate(in) + ADP + phosphate + H(+). Functionally, part of the ABC transporter complex PhnCDE involved in phosphonates import. Responsible for energy coupling to the transport system. In Lactobacillus delbrueckii subsp. bulgaricus (strain ATCC 11842 / DSM 20081 / BCRC 10696 / JCM 1002 / NBRC 13953 / NCIMB 11778 / NCTC 12712 / WDCM 00102 / Lb 14), this protein is Phosphonates import ATP-binding protein PhnC.